The primary structure comprises 876 residues: Valine--tRNA ligase (876 aa).

The 'HIGH' region signature appears at proline 43 to histidine 53. Residues lysine 533–serine 537 carry the 'KMSKS' region motif. Residue lysine 536 participates in ATP binding. Residues glycine 804–lysine 876 are a coiled coil.

It belongs to the class-I aminoacyl-tRNA synthetase family. ValS type 1 subfamily. In terms of assembly, monomer.

It localises to the cytoplasm. It catalyses the reaction tRNA(Val) + L-valine + ATP = L-valyl-tRNA(Val) + AMP + diphosphate. Functionally, catalyzes the attachment of valine to tRNA(Val). As ValRS can inadvertently accommodate and process structurally similar amino acids such as threonine, to avoid such errors, it has a 'posttransfer' editing activity that hydrolyzes mischarged Thr-tRNA(Val) in a tRNA-dependent manner. The protein is Valine--tRNA ligase of Porphyromonas gingivalis (strain ATCC 33277 / DSM 20709 / CIP 103683 / JCM 12257 / NCTC 11834 / 2561).